Here is a 586-residue protein sequence, read N- to C-terminus: Putative Lon protease homolog (586 aa).

Positions 346–543 (GERIGQINAL…TDALPLLLNL (198 aa)) constitute a Lon proteolytic domain. Residues Ser438 and Lys481 contribute to the active site.

It belongs to the peptidase S16 family.

The protein is Putative Lon protease homolog (ycbZ) of Escherichia coli (strain K12).